The chain runs to 390 residues: Chorismate synthase (390 aa).

Residues Arg-48 and Arg-54 each contribute to the NADP(+) site. FMN-binding positions include 125–127 (RSS), 238–239 (NA), Gly-278, 293–297 (KPTSS), and Arg-319. The disordered stretch occupies residues 360-390 (KVPGNIINPTNPVTTQPDVRRAEDPEPDENS). Residues 366 to 376 (INPTNPVTTQP) are compositionally biased toward polar residues.

Belongs to the chorismate synthase family. As to quaternary structure, homotetramer. It depends on FMNH2 as a cofactor.

It carries out the reaction 5-O-(1-carboxyvinyl)-3-phosphoshikimate = chorismate + phosphate. It functions in the pathway metabolic intermediate biosynthesis; chorismate biosynthesis; chorismate from D-erythrose 4-phosphate and phosphoenolpyruvate: step 7/7. Catalyzes the anti-1,4-elimination of the C-3 phosphate and the C-6 proR hydrogen from 5-enolpyruvylshikimate-3-phosphate (EPSP) to yield chorismate, which is the branch point compound that serves as the starting substrate for the three terminal pathways of aromatic amino acid biosynthesis. This reaction introduces a second double bond into the aromatic ring system. This is Chorismate synthase from Nitrosomonas eutropha (strain DSM 101675 / C91 / Nm57).